The primary structure comprises 360 residues: Histidinol-phosphate aminotransferase (360 aa).

Lys211 carries the N6-(pyridoxal phosphate)lysine modification.

This sequence belongs to the class-II pyridoxal-phosphate-dependent aminotransferase family. Histidinol-phosphate aminotransferase subfamily. In terms of assembly, homodimer. Requires pyridoxal 5'-phosphate as cofactor.

The catalysed reaction is L-histidinol phosphate + 2-oxoglutarate = 3-(imidazol-4-yl)-2-oxopropyl phosphate + L-glutamate. It participates in amino-acid biosynthesis; L-histidine biosynthesis; L-histidine from 5-phospho-alpha-D-ribose 1-diphosphate: step 7/9. The sequence is that of Histidinol-phosphate aminotransferase from Cronobacter sakazakii (strain ATCC BAA-894) (Enterobacter sakazakii).